Reading from the N-terminus, the 203-residue chain is VEL1-related protein SPBPB2B2.15 (203 aa).

Positions 1–16 (MFKNLIFLFFIGLATA) are cleaved as a signal peptide.

This sequence belongs to the VEL1 family.

It is found in the cytoplasm. The protein resides in the cytosol. The chain is VEL1-related protein SPBPB2B2.15 from Schizosaccharomyces pombe (strain 972 / ATCC 24843) (Fission yeast).